A 369-amino-acid polypeptide reads, in one-letter code: Coiled-coil domain-containing protein 149 (369 aa).

Positions 1–249 (MKENNNAEIL…AKYKQMAEAV (249 aa)) form a coiled coil.

It belongs to the CCDC149 family. Expressed in amphid and phasmid ciliated neurons, and also pharyngeal, touch receptor and motor neurons.

The protein resides in the cell projection. The protein localises to the cilium. In Caenorhabditis elegans, this protein is Coiled-coil domain-containing protein 149.